Reading from the N-terminus, the 800-residue chain is Calmodulin-sensitive adenylate cyclase (800 aa).

The first 33 residues, 1–33, serve as a signal peptide directing secretion; sequence MTRNKFIPNKFSIISFSVLLFAISSSQAIEVNA. The region spanning 60 to 273 is the ATLF-like domain; sequence KDSINNLVKT…MFEYMNKLEK (214 aa). The tract at residues 294–349 is catalytic CA1; the sequence is DVLKGEKALKASGLVPEHADAFKKIARELNTYILFRPVNKLATNLIKSGVATKGLN. The catalytic CB stretch occupies residues 350 to 489; sequence VHGKSSDWGP…NVEGVLKPLT (140 aa). The active-site Proton acceptor is H351. The segment at 490 to 622 is catalytic CA2; that stretch reads ADYDLFALAP…RFIEKNITGK (133 aa). Positions 491 and 493 each coordinate Mg(2+). Residues T548 and 577 to 579 each bind 3',5'-cyclic AMP; that span reads HGT. Position 577 (H577) interacts with Mg(2+). The interval 623-800 is interaction with calmodulin; the sequence is DYLYYFNRSY…EVFQKIIDEK (178 aa).

Belongs to the adenylyl cyclase class-2 family. Interacts (via ATLF domain) with the cleaved form of protective antigen (PA-63) anthrax toxin; interaction is required for EF translocation into the host cytoplasm. Requires Ca(2+) as cofactor.

The protein resides in the secreted. It is found in the host cytoplasm. The protein localises to the host cytosol. The enzyme catalyses ATP = 3',5'-cyclic AMP + diphosphate. Its activity is regulated as follows. Host calmodulin is an absolute requirement for its activation. Inhibited by ethyl 5-aminopyrazolo[1,5-a]quinazoline-3-carboxylate. Functionally, edema factor (EF), which constitutes one of the three proteins composing the anthrax toxin, causes edema in the host. Acts as a calmodulin-dependent adenylyl cyclase by converting ATP to cAMP, leading to dramatic elevation of intracellular cAMP levels in the host, thereby causing edema. EF is not toxic by itself and only acts as an edema factor when associated with protective antigen (PA) to form the edema toxin (EdTx). Required for the survival of germinated spores within macrophages at the early stages of infection. The protein is Calmodulin-sensitive adenylate cyclase (cya) of Bacillus anthracis.